The chain runs to 515 residues: 1-pyrroline-5-carboxylate dehydrogenase (515 aa).

Catalysis depends on residues Glu-286 and Cys-320.

The protein belongs to the aldehyde dehydrogenase family. RocA subfamily.

The enzyme catalyses L-glutamate 5-semialdehyde + NAD(+) + H2O = L-glutamate + NADH + 2 H(+). It functions in the pathway amino-acid degradation; L-proline degradation into L-glutamate; L-glutamate from L-proline: step 2/2. The chain is 1-pyrroline-5-carboxylate dehydrogenase from Bacillus mycoides (strain KBAB4) (Bacillus weihenstephanensis).